A 704-amino-acid chain; its full sequence is MARHSGTSEGPKKRGRTELRSIRRPNRSQHSKHDQQVVHESENEDSLESSSDDDEDIAQAEAENSDRKEKVYGALLTILNSEHPERKKHKSHSTDFVKEIDEQEEIEQGMASESEEEDEENDEEESNEGDEEEEEEPTDQLDTFESHFNDVSQDLVDDISAGFKDKQIKYKSMKYSLDKKESAIFGKPLLLTQQDETIDNPVLTSSYDSYFIKQRLKIQNDLLDSSKENLTPLKKKLLDPMFQYKDVLCEYTNYENDEKEYRELYSLHVLNHIYKTRDKILKDNQRLQENDDLECLDQGFTRPKVLIVVPTRDTAYQVVETIIEKSGLDQIDKKGKFKDQFFDDSLPPTSKPKSFRHVFKGNTNDFFVLGMKFTRKAIKLYSNFYQSDIIICSPLGIQMILENTDKKKRQDDFLSSIEVMIVDQLHSIEYQNISHVYTILEHINKIPQQQREADFSRIRMWYINDQAKFLRQTMLFTRYISPTANAIINGKCHNMAGRWKNNQIISSEDSSIGQLGIKIKQIFQRFDLVGGTVVDESDYRFKYFTSVVMQNIVKSTGYEDGILVYIPEYTDYMRLRNYMKEKTTILFSEINEYSTQKQLDSNRSMFQQGRTKVLLYTERLHHYRRYELKGIKSVIFYKPPTNPEFYNEVIRFTAKNAFLGKSDINISTIRTVYSKLDGLALQRIVGSKRAAILCHGQNESYDFK.

The segment at 1-140 (MARHSGTSEG…EEEEEEPTDQ (140 aa)) is disordered. 2 stretches are compositionally biased toward basic and acidic residues: residues 10–21 (GPKKRGRTELRS) and 31–41 (SKHDQQVVHES). Composition is skewed to acidic residues over residues 42 to 58 (ENEDSLESSSDDDEDIA) and 101 to 139 (DEQEEIEQGMASESEEEDEENDEEESNEGDEEEEEEPTD).

It belongs to the UTP25 family. In terms of assembly, component of the ribosomal small subunit (SSU) processome composed of at least 40 protein subunits and snoRNA U3.

The protein localises to the nucleus. It localises to the nucleolus. Functionally, DEAD-box RNA helicase-like protein required for pre-18S rRNA processing, specifically at sites A0, A1, and A2. The polypeptide is U3 small nucleolar RNA-associated protein 25 (UTP25) (Vanderwaltozyma polyspora (strain ATCC 22028 / DSM 70294 / BCRC 21397 / CBS 2163 / NBRC 10782 / NRRL Y-8283 / UCD 57-17) (Kluyveromyces polysporus)).